Reading from the N-terminus, the 331-residue chain is Ferredoxin--NADP reductase 2 (331 aa).

Residues glutamate 37, glutamine 45, tyrosine 50, valine 90, phenylalanine 124, aspartate 286, and threonine 327 each contribute to the FAD site.

This sequence belongs to the ferredoxin--NADP reductase type 2 family. Homodimer. FAD is required as a cofactor.

It catalyses the reaction 2 reduced [2Fe-2S]-[ferredoxin] + NADP(+) + H(+) = 2 oxidized [2Fe-2S]-[ferredoxin] + NADPH. This chain is Ferredoxin--NADP reductase 2, found in Listeria innocua serovar 6a (strain ATCC BAA-680 / CLIP 11262).